The primary structure comprises 426 residues: Protein sum2 (426 aa).

The Sm domain occupies 1–80 (MTEFIGSRIS…VKDLRIEEPA (80 aa)). Disordered regions lie at residues 79 to 100 (PATTPSAPPVQPPNDPAIIGSN), 204 to 305 (GMPS…AKPR), and 348 to 426 (SCES…ANDQ). A compositionally biased stretch (pro residues) spans 84–93 (SAPPVQPPND). The segment covering 226-237 (VSASPSLQSMPP) has biased composition (polar residues). Positions 261–278 (RNSTVTNDRVVNTTVDVS) are enriched in low complexity. Residues 279-298 (QSQTVETSGPSKEVPTTQPD) show a composition bias toward polar residues. Residues 296–332 (QPDASAAKPRTEFDFQTANQKFQSMKDDLLKGKNDEE) form the DFDF domain. The short motif at 335-351 (EFYKPKQSFFDNISCES) is the FFD box element. The span at 350–371 (ESKEKGMEAADRRALRDRERSL) shows a compositional bias: basic and acidic residues. The TFG box motif lies at 360 to 380 (DRRALRDRERSLNMETFGVAG). Residues 384 to 401 (RGRRGRGRGRGGRGRGRG) are compositionally biased toward basic residues. Polar residues predominate over residues 405–426 (NQYNQYRNSNGSQPRAQPANDQ).

In terms of biological role, required for G2/M phase checkpoint control. This chain is Protein sum2 (sum2), found in Schizosaccharomyces pombe (strain 972 / ATCC 24843) (Fission yeast).